The primary structure comprises 107 residues: NADH dehydrogenase [ubiquinone] 1 beta subcomplex subunit 10-A (107 aa).

A disordered region spans residues 1–23 (MGRKKGLPEFEESAPDGFDPENP).

It belongs to the complex I NDUFB10 subunit family. Complex I is composed of at least 49 different subunits.

The protein localises to the mitochondrion inner membrane. Functionally, accessory subunit of the mitochondrial membrane respiratory chain NADH dehydrogenase (Complex I), that is believed not to be involved in catalysis. Complex I functions in the transfer of electrons from NADH to the respiratory chain. The immediate electron acceptor for the enzyme is believed to be ubiquinone. This Arabidopsis thaliana (Mouse-ear cress) protein is NADH dehydrogenase [ubiquinone] 1 beta subcomplex subunit 10-A.